The following is a 281-amino-acid chain: Phosphonates import ATP-binding protein PhnC (281 aa).

An ABC transporter domain is found at 5 to 253 (IEVCGLTKSF…MLRDLYGTEA (249 aa)). Residue 38–45 (GASGSGKS) participates in ATP binding.

This sequence belongs to the ABC transporter superfamily. Phosphonates importer (TC 3.A.1.9.1) family. As to quaternary structure, the complex is composed of two ATP-binding proteins (PhnC), two transmembrane proteins (PhnE) and a solute-binding protein (PhnD).

It localises to the cell inner membrane. The enzyme catalyses phosphonate(out) + ATP + H2O = phosphonate(in) + ADP + phosphate + H(+). Part of the ABC transporter complex PhnCDE involved in phosphonates import. Responsible for energy coupling to the transport system. This Cupriavidus pinatubonensis (strain JMP 134 / LMG 1197) (Cupriavidus necator (strain JMP 134)) protein is Phosphonates import ATP-binding protein PhnC.